A 321-amino-acid chain; its full sequence is Glucokinase (321 aa).

8-13 (GDVGGT) serves as a coordination point for ATP.

It belongs to the bacterial glucokinase family.

It is found in the cytoplasm. It catalyses the reaction D-glucose + ATP = D-glucose 6-phosphate + ADP + H(+). In Salmonella arizonae (strain ATCC BAA-731 / CDC346-86 / RSK2980), this protein is Glucokinase.